The chain runs to 123 residues: Transmembrane protein 254 (123 aa).

Position 2 is an N-acetylalanine (Ala-2). 3 consecutive transmembrane segments (helical) span residues 15-35 (LFWF…VFWP), 61-81 (LCNG…YAIV), and 95-115 (LLWF…LIAY).

The protein localises to the membrane. The sequence is that of Transmembrane protein 254 (TMEM254) from Pongo abelii (Sumatran orangutan).